The following is a 440-amino-acid chain: tRNA modification GTPase MnmE (440 aa).

Positions 23, 80, and 120 each coordinate (6S)-5-formyl-5,6,7,8-tetrahydrofolate. Residues 217-366 form the TrmE-type G domain; that stretch reads GLKIVIAGEP…LLAMLQAHLP (150 aa). K(+) is bound at residue asparagine 227. GTP is bound by residues 227–232, 246–252, and 271–274; these read NAGKSS, TEIAGTT, and DTAG. Residue serine 231 coordinates Mg(2+). Threonine 246, isoleucine 248, and threonine 251 together coordinate K(+). Mg(2+) is bound at residue threonine 252. Lysine 440 is a (6S)-5-formyl-5,6,7,8-tetrahydrofolate binding site.

This sequence belongs to the TRAFAC class TrmE-Era-EngA-EngB-Septin-like GTPase superfamily. TrmE GTPase family. In terms of assembly, homodimer. Heterotetramer of two MnmE and two MnmG subunits. K(+) serves as cofactor.

The protein resides in the cytoplasm. In terms of biological role, exhibits a very high intrinsic GTPase hydrolysis rate. Involved in the addition of a carboxymethylaminomethyl (cmnm) group at the wobble position (U34) of certain tRNAs, forming tRNA-cmnm(5)s(2)U34. The protein is tRNA modification GTPase MnmE of Sinorhizobium medicae (strain WSM419) (Ensifer medicae).